The chain runs to 251 residues: Probable transcriptional regulatory protein SYO3AOP1_0685 (251 aa).

Belongs to the TACO1 family.

It localises to the cytoplasm. In Sulfurihydrogenibium sp. (strain YO3AOP1), this protein is Probable transcriptional regulatory protein SYO3AOP1_0685.